We begin with the raw amino-acid sequence, 181 residues long: Thioredoxin-like protein CITRX1, chloroplastic (181 aa).

The disordered stretch occupies residues 1 to 20 (MQAATLSFHPSAPPPQTSAC). A chloroplast-targeting transit peptide spans 1 to 70 (MQAATLSFHP…PAVATGKYVR (70 aa)). Residues 71–181 (EDYLVKKVSA…MMRDIINNDL (111 aa)) form the Thioredoxin domain. Residues cysteine 104 and cysteine 107 each act as nucleophile in the active site. Cysteine 104 and cysteine 107 are joined by a disulfide.

The protein belongs to the thioredoxin family. Plant CITRX-type subfamily.

The protein localises to the plastid. The protein resides in the chloroplast. Probable thiol-disulfide oxidoreductase that may play a role in proper chloroplast development. The chain is Thioredoxin-like protein CITRX1, chloroplastic from Nicotiana benthamiana.